A 296-amino-acid chain; its full sequence is Protoheme IX farnesyltransferase (296 aa).

9 helical membrane passes run 11-31 (PGII…AAQG), 35-55 (YPLF…GCVF), 84-104 (VTLV…YIAA), 107-127 (LAMW…SLYM), 132-152 (VYGT…GYCA), 162-182 (LILL…IAIF), 208-228 (ITLY…GGYA), 229-249 (GYKY…MALS), and 264-284 (LFVF…VDSM).

This sequence belongs to the UbiA prenyltransferase family. Protoheme IX farnesyltransferase subfamily.

The protein resides in the cell inner membrane. The catalysed reaction is heme b + (2E,6E)-farnesyl diphosphate + H2O = Fe(II)-heme o + diphosphate. It participates in porphyrin-containing compound metabolism; heme O biosynthesis; heme O from protoheme: step 1/1. Functionally, converts heme B (protoheme IX) to heme O by substitution of the vinyl group on carbon 2 of heme B porphyrin ring with a hydroxyethyl farnesyl side group. The sequence is that of Protoheme IX farnesyltransferase from Pectobacterium carotovorum subsp. carotovorum (strain PC1).